The following is a 366-amino-acid chain: DNA double-strand break repair protein Mre11 (366 aa).

Mn(2+) contacts are provided by Asp8, His10, Asp49, and Asn84. His85 serves as the catalytic Proton donor. Mn(2+) is bound by residues His158, His186, and His188.

It belongs to the MRE11/RAD32 family. As to quaternary structure, homodimer. Forms a heterotetramer composed of two Mre11 subunits and two Rad50 subunits. Mn(2+) serves as cofactor.

Its activity is regulated as follows. Nuclease activity is regulated by Rad50. Part of the Rad50/Mre11 complex, which is involved in the early steps of DNA double-strand break (DSB) repair. The complex may facilitate opening of the processed DNA ends to aid in the recruitment of HerA and NurA. Mre11 binds to DSB ends and has both double-stranded 3'-5' exonuclease activity and single-stranded endonuclease activity. This chain is DNA double-strand break repair protein Mre11, found in Methanocaldococcus jannaschii (strain ATCC 43067 / DSM 2661 / JAL-1 / JCM 10045 / NBRC 100440) (Methanococcus jannaschii).